We begin with the raw amino-acid sequence, 251 residues long: ATP synthase subunit a (251 aa).

5 helical membrane passes run 14-34 (GFVK…LLAV), 78-98 (YLPF…FAVF), 107-127 (SLST…FYGI), 174-194 (MILA…MGVL), and 196-216 (LLIG…YIAA). Residues 224–251 (NAGASDDEGGEDAKSACAAGGKICKHKP) form a disordered region.

This sequence belongs to the ATPase A chain family. As to quaternary structure, F-type ATPases have 2 components, CF(1) - the catalytic core - and CF(0) - the membrane proton channel. CF(1) has five subunits: alpha(3), beta(3), gamma(1), delta(1), epsilon(1). CF(0) has three main subunits: a(1), b(2) and c(9-12). The alpha and beta chains form an alternating ring which encloses part of the gamma chain. CF(1) is attached to CF(0) by a central stalk formed by the gamma and epsilon chains, while a peripheral stalk is formed by the delta and b chains.

It localises to the cell inner membrane. Its function is as follows. Key component of the proton channel; it plays a direct role in the translocation of protons across the membrane. The sequence is that of ATP synthase subunit a from Nitrosospira multiformis (strain ATCC 25196 / NCIMB 11849 / C 71).